Here is a 156-residue protein sequence, read N- to C-terminus: Small ribosomal subunit protein uS7 (156 aa).

Belongs to the universal ribosomal protein uS7 family. Part of the 30S ribosomal subunit. Contacts proteins S9 and S11.

One of the primary rRNA binding proteins, it binds directly to 16S rRNA where it nucleates assembly of the head domain of the 30S subunit. Is located at the subunit interface close to the decoding center, probably blocks exit of the E-site tRNA. This Acaryochloris marina (strain MBIC 11017) protein is Small ribosomal subunit protein uS7.